We begin with the raw amino-acid sequence, 194 residues long: MHILTAGVDEAGRGPLVGSVFAAAVILPETFDLPGLTDSKKLSEKKRDALAEMIKNQAVEWHVAAASPEEIASLNILHATMLAMKRAVDGLAVRPEKIFIDGNRIPEHLNIPAEAVVKGDSKIIEISAASVLAKTARDAEMYALAQRHPQYGFDKHKGYGTKQHLEALEKYGVLPEHRRDFAPVRNLLAQQALF.

Residues 3-193 (ILTAGVDEAG…VRNLLAQQAL (191 aa)) form the RNase H type-2 domain. Residues aspartate 9, glutamate 10, and aspartate 101 each coordinate a divalent metal cation.

It belongs to the RNase HII family. Mn(2+) is required as a cofactor. The cofactor is Mg(2+).

It is found in the cytoplasm. It carries out the reaction Endonucleolytic cleavage to 5'-phosphomonoester.. Endonuclease that specifically degrades the RNA of RNA-DNA hybrids. The protein is Ribonuclease HII (rnhB) of Neisseria meningitidis serogroup B (strain ATCC BAA-335 / MC58).